Reading from the N-terminus, the 151-residue chain is Secreted RxLR effector protein 30 (151 aa).

An N-terminal signal peptide occupies residues 1 to 19 (MRSSTILIVLGIAILAVNG). A RxLR-dEER motif is present at residues 38–53 (RLLRSTSTEHETDEER).

The protein belongs to the RxLR effector family.

The protein localises to the secreted. It is found in the host nucleus. Functionally, effector that acts as a broad suppressor of cell death to interrupt plant immunity. Inhibits cell death induced by cell death-inducing proteins, including the PAMP elicitor INF1 from P.infestans. This is Secreted RxLR effector protein 30 from Plasmopara viticola (Downy mildew of grapevine).